The sequence spans 338 residues: Nicotinate-nucleotide--dimethylbenzimidazole phosphoribosyltransferase (338 aa).

Glutamate 306 functions as the Proton acceptor in the catalytic mechanism.

The protein belongs to the CobT family.

It catalyses the reaction 5,6-dimethylbenzimidazole + nicotinate beta-D-ribonucleotide = alpha-ribazole 5'-phosphate + nicotinate + H(+). It participates in nucleoside biosynthesis; alpha-ribazole biosynthesis; alpha-ribazole from 5,6-dimethylbenzimidazole: step 1/2. Catalyzes the synthesis of alpha-ribazole-5'-phosphate from nicotinate mononucleotide (NAMN) and 5,6-dimethylbenzimidazole (DMB). This chain is Nicotinate-nucleotide--dimethylbenzimidazole phosphoribosyltransferase, found in Cereibacter sphaeroides (strain ATCC 17025 / ATH 2.4.3) (Rhodobacter sphaeroides).